The sequence spans 183 residues: Ras-related protein Rap-2a (183 aa).

Residue 10–17 (GSGGVGKS) coordinates GTP. The short motif at 32 to 40 (YDPTIEDFY) is the Effector region element. Residues 57–61 (DTAGT) and 116–119 (NKVD) contribute to the GTP site. S-palmitoyl cysteine attachment occurs at residues Cys176 and Cys177. Cys180 is subject to Cysteine methyl ester. Cys180 carries S-farnesyl cysteine lipidation. Residues 181-183 (NIQ) constitute a propeptide, removed in mature form.

The protein belongs to the small GTPase superfamily. Ras family. Interacts with PLCE1. Interacts with ARHGAP29, SGSM1, SGSM2 and SGSM3. Interacts (GTP-bound form preferentially) with MAP4K4. Interacts with MINK1. Interacts with cytoskeletal actin. Interacts (GTP-bound form) with RUNDC3A. Interacts (GTP-bound form preferentially) with TNIK (via the CNH domain); the interaction is direct and recruits RAP2A to the E3 ubiquitin ligase NEDD4. Interacts with RGS14; the interaction is GTP-dependent. In terms of processing, ubiquitinated; undergoes 'Lys-63' monoubiquitination and diubiquitination by NEDD4. Multiple lysine residues are probably modified. Ubiquitination requires TNIK, prevents interaction with effectors and inactivates RAP2A. Ubiquitination by the ECS(RAB40B) complex leads to RAP2A localization to lamellipodia plasma membrane, activation, and regulation of sorting at early endosomes for recycling to the lamellipodia plasma membrane. Post-translationally, palmitoylated. Palmitoylation is required for association with recycling endosome membranes and activation of TNIK. As to expression, expressed in granular layer of the cerebellum, forebrain, striatum, layer V of the cortex, olfactory cortex, tubercules, subthalamic and hippocampus, particularly in the CA2 region, to a lesser extent in the CA1 region and the external layer of the dentate gyrus. Expressed in neurons.

It is found in the midbody. It localises to the cell projection. Its subcellular location is the lamellipodium membrane. The protein localises to the golgi apparatus. The protein resides in the recycling endosome membrane. It is found in the lysosome. It carries out the reaction GTP + H2O = GDP + phosphate + H(+). Its activity is regulated as follows. Activated by the guanine nucleotide-exchange factors RAPGEF3 and RAPGEF4 in a cAMP-dependent manner. Nucleotide exchange is also specifically stimulated by RAPGEF5, RASGEF1A and RASGEF1B. In terms of biological role, small GTP-binding protein which cycles between a GDP-bound inactive and a GTP-bound active form. In its active form interacts with and regulates several effectors including MAP4K4, MINK1 and TNIK. Part of a signaling complex composed of NEDD4, RAP2A and TNIK which regulates neuronal dendrite extension and arborization during development. More generally, it is part of several signaling cascades and may regulate cytoskeletal rearrangements, cell migration, cell adhesion and cell spreading. This is Ras-related protein Rap-2a from Mus musculus (Mouse).